The primary structure comprises 207 residues: BON1-associated protein 2 (207 aa).

The 112-residue stretch at 1 to 112 folds into the C2 domain; sequence MSYSTFKRSL…GFAPQGHLNF (112 aa).

In terms of assembly, interacts with BON1, BON2 and BON3. In terms of tissue distribution, expressed in roots, leaves, stems and flowers.

It localises to the membrane. Functionally, negative regulator of cell death and defense responses. Exhibits calcium-dependent phospholipid binding properties. The chain is BON1-associated protein 2 (BAP2) from Arabidopsis thaliana (Mouse-ear cress).